A 245-amino-acid chain; its full sequence is QLRAFVCRLSSVIFYETMYVGIVLLGLIAFDRFLKIIRPLRNIFLKKTVFAKTVSVFIWSFFFFISLPNMILSNKEATPSSVKKCASLKGPLGLKWHQIVNNISQFIFWTVFVLMLVFYVVIAKKVYDSYRKSKSKDRKNNKKLEGKVFVVVAVFFVCFAPFHFTRVPYTYSQTNNKTDCRLQNQLFIAKETTLFLAATNICMDPLIYIFLCKKFTEKLPCMRGRKTIASSQENQSSQTDNITLG.

Over 1 to 9 the chain is Extracellular; it reads QLRAFVCRL. A disulfide bridge links Cys7 with Cys85. A helical transmembrane segment spans residues 10 to 30; it reads SSVIFYETMYVGIVLLGLIAF. The Cytoplasmic portion of the chain corresponds to 31-35; it reads DRFLK. The chain crosses the membrane as a helical span at residues 36–56; the sequence is IIRPLRNIFLKKTVFAKTVSV. The Extracellular segment spans residues 57–85; it reads FIWSFFFFISLPNMILSNKEATPSSVKKC. The chain crosses the membrane as a helical span at residues 86 to 106; it reads ASLKGPLGLKWHQIVNNISQF. Topologically, residues 107–126 are cytoplasmic; that stretch reads IFWTVFVLMLVFYVVIAKKV. Residues 127 to 147 traverse the membrane as a helical segment; that stretch reads YDSYRKSKSKDRKNNKKLEGK. The Extracellular portion of the chain corresponds to 148-174; it reads VFVVVAVFFVCFAPFHFTRVPYTYSQT. The chain crosses the membrane as a helical span at residues 175-195; sequence NNKTDCRLQNQLFIAKETTLF. The Cytoplasmic portion of the chain corresponds to 196–245; that stretch reads LAATNICMDPLIYIFLCKKFTEKLPCMRGRKTIASSQENQSSQTDNITLG.

It belongs to the G-protein coupled receptor 1 family.

The protein localises to the cell membrane. In terms of biological role, receptor for ADP. Coupled to G(i)-proteins. May play a role in hematopoiesis and the immune system. This Macaca fascicularis (Crab-eating macaque) protein is P2Y purinoceptor 13 (P2RY13).